The sequence spans 141 residues: Large ribosomal subunit protein uL11c (141 aa).

It belongs to the universal ribosomal protein uL11 family. Part of the ribosomal stalk of the 50S ribosomal subunit. Interacts with L10 and the large rRNA to form the base of the stalk. L10 forms an elongated spine to which L12 dimers bind in a sequential fashion forming a multimeric L10(L12)X complex.

It is found in the plastid. The protein localises to the chloroplast. Its function is as follows. Forms part of the ribosomal stalk which helps the ribosome interact with GTP-bound translation factors. This Thalassiosira pseudonana (Marine diatom) protein is Large ribosomal subunit protein uL11c.